The sequence spans 514 residues: 1-pyrroline-5-carboxylate dehydrogenase (514 aa).

Active-site residues include Glu-286 and Cys-320.

Belongs to the aldehyde dehydrogenase family. RocA subfamily.

The enzyme catalyses L-glutamate 5-semialdehyde + NAD(+) + H2O = L-glutamate + NADH + 2 H(+). Its pathway is amino-acid degradation; L-proline degradation into L-glutamate; L-glutamate from L-proline: step 2/2. This chain is 1-pyrroline-5-carboxylate dehydrogenase, found in Staphylococcus aureus (strain MSSA476).